A 179-amino-acid chain; its full sequence is Large ribosomal subunit protein uL6 (179 aa).

Belongs to the universal ribosomal protein uL6 family. In terms of assembly, part of the 50S ribosomal subunit.

Functionally, this protein binds to the 23S rRNA, and is important in its secondary structure. It is located near the subunit interface in the base of the L7/L12 stalk, and near the tRNA binding site of the peptidyltransferase center. The chain is Large ribosomal subunit protein uL6 from Mycobacterium sp. (strain KMS).